Reading from the N-terminus, the 799-residue chain is Heat shock protein 90-6, mitochondrial (799 aa).

A mitochondrion-targeting transit peptide spans 1 to 48 (MIRLSKRSVSTLLRSGNQSFRIAAAASTSRSSPSATDVKRSDTESRWY). Residues 23 to 35 (AAAASTSRSSPSA) show a composition bias toward low complexity. The interval 23-61 (AAAASTSRSSPSATDVKRSDTESRWYSSLTNGQSKNSGS) is disordered. Residues 46 to 61 (RWYSSLTNGQSKNSGS) show a composition bias toward polar residues. Residues Glu-124, Asn-128, Asp-170, Met-175, 190–191 (SG), 214–219 (QFGVGF), and Thr-269 contribute to the ATP site. The interval 314–337 (EVEVEDDPTETKKDDQDDQTEKKK) is disordered. The segment covering 322-334 (TETKKDDQDDQTE) has biased composition (basic and acidic residues). ATP is bound at residue Arg-464. The span at 766-777 (SPEVQPQQQQMA) shows a compositional bias: polar residues. Residues 766–799 (SPEVQPQQQQMAHSHDAETFEAEVVEPVEVDGKK) are disordered. The span at 784–799 (TFEAEVVEPVEVDGKK) shows a compositional bias: acidic residues.

Belongs to the heat shock protein 90 family. Interacts with P23-1.

The protein resides in the mitochondrion. Functionally, molecular chaperone which stabilizes unfolding protein intermediates and functions as a folding molecular chaperone that assists the non-covalent folding of proteins in an ATP-dependent manner. This is Heat shock protein 90-6, mitochondrial from Arabidopsis thaliana (Mouse-ear cress).